A 355-amino-acid polypeptide reads, in one-letter code: Vacuolar protein sorting-associated protein 37C (355 aa).

S29 carries the phosphoserine modification. A VPS37 C-terminal domain is found at 78-167 (VERCQEQKAK…RKPRASQELA (90 aa)). Positions 159-355 (KPRASQELAG…PPPGPAWPGY (197 aa)) are disordered. Pro residues-rich tracts occupy residues 170-186 (APPPRPPPPVRPVPQGT) and 194-214 (PQPPLAMPPYPLPYSPSPSLP). Residues 291 to 304 (APSPGYPQQSPYPA) are compositionally biased toward low complexity. Over residues 321–355 (PGQPQPSVPLQPPYPPGPAPPYGFPPPPGPAWPGY) the composition is skewed to pro residues.

This sequence belongs to the VPS37 family. As to quaternary structure, component of the ESCRT-I complex (endosomal sorting complex required for transport I) which consists of TSG101, VPS28, a VPS37 protein (VPS37A to -D) and MVB12A or MVB12B in a 1:1:1:1 stoichiometry. Interacts with TSG101, VPS28, MVB12A and MVB12B. Component of the ESCRT-I complex (endosomal sorting complex required for transport I) which consists of TSG101, VPS28, a VPS37 protein (VPS37A to -D) and UBAP1 in a 1:1:1:1 stoichiometry. Interacts with HGS and STAM2. Interacts with CEP55. Phosphorylated by TBK1.

The protein resides in the late endosome membrane. Its function is as follows. Component of the ESCRT-I complex, a regulator of vesicular trafficking process. Required for the sorting of endocytic ubiquitinated cargos into multivesicular bodies. May be involved in cell growth and differentiation. This is Vacuolar protein sorting-associated protein 37C (VPS37C) from Homo sapiens (Human).